The primary structure comprises 318 residues: Glutathione synthetase (318 aa).

An ATP-grasp domain is found at 133-317 (KMYALQFTSV…LGQQVMAWLF (185 aa)). 159–215 (VQQQGMAVLKPLGGKGGEGILFLQAGDRNLNSMIEISTQRGQLPVMLQEYLPAAKEG) is a binding site for ATP. Residues Glu-288 and Asn-290 each contribute to the Mg(2+) site.

The protein belongs to the prokaryotic GSH synthase family. Requires Mg(2+) as cofactor. Mn(2+) serves as cofactor.

The catalysed reaction is gamma-L-glutamyl-L-cysteine + glycine + ATP = glutathione + ADP + phosphate + H(+). It functions in the pathway sulfur metabolism; glutathione biosynthesis; glutathione from L-cysteine and L-glutamate: step 2/2. The chain is Glutathione synthetase from Thermosynechococcus vestitus (strain NIES-2133 / IAM M-273 / BP-1).